The sequence spans 452 residues: Elongation factor Tu, mitochondrial (452 aa).

Residues M1–L43 constitute a mitochondrion transit peptide. A tr-type G domain is found at K55–T251. The interval G64 to T71 is G1. The GTP site is built by D67, G69, K70, T71, and T72. Mg(2+) is bound at residue T71. K79 carries the N6-acetyllysine modification. At K88 the chain carries N6-acetyllysine; alternate. At K88 the chain carries N6-succinyllysine; alternate. Residues G105 to N109 form a G2 region. The segment at D126–G129 is G3. GTP contacts are provided by N181, D184, S219, A220, and L221. Residues N181–D184 form a G4 region. Positions S219 to L221 are G5. The residue at position 234 (K234) is an N6-succinyllysine. The residue at position 256 (K256) is an N6-acetyllysine. Residue T278 is modified to Phosphothreonine. K286 carries the N6-succinyllysine modification. S312 is modified (phosphoserine). K361 and K418 each carry N6-acetyllysine.

This sequence belongs to the TRAFAC class translation factor GTPase superfamily. Classic translation factor GTPase family. EF-Tu/EF-1A subfamily. As to quaternary structure, interacts with NLRX1. Interacts with ATG16L1.

The protein resides in the mitochondrion. The enzyme catalyses GTP + H2O = GDP + phosphate + H(+). Functionally, GTP hydrolase that promotes the GTP-dependent binding of aminoacyl-tRNA to the A-site of ribosomes during protein biosynthesis. Also plays a role in the regulation of autophagy and innate immunity. Recruits ATG5-ATG12 and NLRX1 at mitochondria and serves as a checkpoint of the RIGI-MAVS pathway. In turn, inhibits RLR-mediated type I interferon while promoting autophagy. In Mus musculus (Mouse), this protein is Elongation factor Tu, mitochondrial (Tufm).